Consider the following 282-residue polypeptide: D-alanine aminotransferase (282 aa).

Y32 serves as a coordination point for substrate. Pyridoxal 5'-phosphate is bound at residue R51. Substrate contacts are provided by R99 and H101. K146 (proton acceptor) is an active-site residue. At K146 the chain carries N6-(pyridoxal phosphate)lysine. Residue E178 participates in pyridoxal 5'-phosphate binding.

It belongs to the class-IV pyridoxal-phosphate-dependent aminotransferase family. In terms of assembly, homodimer. Pyridoxal 5'-phosphate is required as a cofactor.

The enzyme catalyses D-alanine + 2-oxoglutarate = D-glutamate + pyruvate. Acts on the D-isomers of alanine, leucine, aspartate, glutamate, aminobutyrate, norvaline and asparagine. The enzyme transfers an amino group from a substrate D-amino acid to the pyridoxal phosphate cofactor to form pyridoxamine and an alpha-keto acid in the first half-reaction. The second half-reaction is the reverse of the first, transferring the amino group from the pyridoxamine to a second alpha-keto acid to form the product D-amino acid via a ping-pong mechanism. This is an important process in the formation of D-alanine and D-glutamate, which are essential bacterial cell wall components. The protein is D-alanine aminotransferase (dat) of Staphylococcus epidermidis (strain ATCC 35984 / DSM 28319 / BCRC 17069 / CCUG 31568 / BM 3577 / RP62A).